Reading from the N-terminus, the 75-residue chain is Kappa-scoloptoxin(03)-Ssm1e (75 aa).

The first 23 residues, 1-23 (MKSSMAILLVMALIIFTLDKNYS), serve as a signal peptide directing secretion.

Belongs to the scoloptoxin-03 family. Contains 3 disulfide bonds. Expressed by the venom gland.

It localises to the secreted. In terms of biological role, inhibits voltage-gated potassium channels. This Scolopendra mutilans (Chinese red-headed centipede) protein is Kappa-scoloptoxin(03)-Ssm1e.